A 118-amino-acid polypeptide reads, in one-letter code: Large ribosomal subunit protein bL19 (118 aa).

Belongs to the bacterial ribosomal protein bL19 family.

Its function is as follows. This protein is located at the 30S-50S ribosomal subunit interface and may play a role in the structure and function of the aminoacyl-tRNA binding site. The sequence is that of Large ribosomal subunit protein bL19 from Coprothermobacter proteolyticus (strain ATCC 35245 / DSM 5265 / OCM 4 / BT).